The primary structure comprises 379 residues: Eukaryotic translation initiation factor 3 subunit M (379 aa).

In terms of domain architecture, PCI spans 179-341 (RSEEASKVMI…RKVIISSVAQ (163 aa)).

The protein belongs to the eIF-3 subunit M family. As to quaternary structure, component of the eukaryotic translation initiation factor 3 (eIF-3) complex.

It localises to the cytoplasm. Its function is as follows. Component of the eukaryotic translation initiation factor 3 (eIF-3) complex, which is involved in protein synthesis of a specialized repertoire of mRNAs and, together with other initiation factors, stimulates binding of mRNA and methionyl-tRNAi to the 40S ribosome. The eIF-3 complex specifically targets and initiates translation of a subset of mRNAs involved in cell proliferation. The chain is Eukaryotic translation initiation factor 3 subunit M from Nematostella vectensis (Starlet sea anemone).